The sequence spans 152 residues: Mediator of RNA polymerase II transcription subunit 9 (152 aa).

The stretch at 98 to 150 (IKRCKALLQENEEVRNLLANSIEEWENIIADKEQQLRVKAKVLRDLDARIEKI) forms a coiled coil.

This sequence belongs to the Mediator complex subunit 9 family. Component of the Mediator complex.

It is found in the nucleus. Component of the Mediator complex, a coactivator involved in the regulated transcription of nearly all RNA polymerase II-dependent genes. Mediator functions as a bridge to convey information from gene-specific regulatory proteins to the basal RNA polymerase II transcription machinery. Mediator is recruited to promoters by direct interactions with regulatory proteins and serves as a scaffold for the assembly of a functional preinitiation complex with RNA polymerase II and the general transcription factors. The protein is Mediator of RNA polymerase II transcription subunit 9 (CSE2) of Candida glabrata (strain ATCC 2001 / BCRC 20586 / JCM 3761 / NBRC 0622 / NRRL Y-65 / CBS 138) (Yeast).